A 135-amino-acid chain; its full sequence is Snaclec rhodocetin subunit gamma (135 aa).

3 cysteine pairs are disulfide-bonded: C4–C15, C32–C129, and C104–C121. The 120-residue stretch at 11–130 (YDQHCYQAFN…CQAKNPFVCK (120 aa)) folds into the C-type lectin domain.

This sequence belongs to the snaclec family. Heterotetramer of subunit alpha, beta, gamma and delta; only the gamma and the delta subunits are disulfide-linked. Alpha-beta heterodimer and gamma-delta heterodimer associate orthogonally, giving a cruciform conformation. This heterotetramer may covalently dimerizes thanks to the gamma subunit. Expressed by the venom gland.

The protein localises to the secreted. Functionally, potent inhibitor of collagen-induced platelet aggregation. It acts by binding to the integrin alpha2A domain and blocks collagen binding to integrin alpha-2/beta-1 (ITGA2/ITGB1). The gamma/delta subunits mainly contribute to this activity. The sequence is that of Snaclec rhodocetin subunit gamma from Calloselasma rhodostoma (Malayan pit viper).